The following is a 354-amino-acid chain: UDP-N-acetylglucosamine--N-acetylmuramyl-(pentapeptide) pyrophosphoryl-undecaprenol N-acetylglucosamine transferase (354 aa).

UDP-N-acetyl-alpha-D-glucosamine contacts are provided by residues 15 to 17, Asn-127, Arg-163, Ser-191, Ile-244, 263 to 268, and Gln-288; these read TGG and ALTVSE.

Belongs to the glycosyltransferase 28 family. MurG subfamily.

The protein localises to the cell inner membrane. It carries out the reaction di-trans,octa-cis-undecaprenyl diphospho-N-acetyl-alpha-D-muramoyl-L-alanyl-D-glutamyl-meso-2,6-diaminopimeloyl-D-alanyl-D-alanine + UDP-N-acetyl-alpha-D-glucosamine = di-trans,octa-cis-undecaprenyl diphospho-[N-acetyl-alpha-D-glucosaminyl-(1-&gt;4)]-N-acetyl-alpha-D-muramoyl-L-alanyl-D-glutamyl-meso-2,6-diaminopimeloyl-D-alanyl-D-alanine + UDP + H(+). The protein operates within cell wall biogenesis; peptidoglycan biosynthesis. Cell wall formation. Catalyzes the transfer of a GlcNAc subunit on undecaprenyl-pyrophosphoryl-MurNAc-pentapeptide (lipid intermediate I) to form undecaprenyl-pyrophosphoryl-MurNAc-(pentapeptide)GlcNAc (lipid intermediate II). This chain is UDP-N-acetylglucosamine--N-acetylmuramyl-(pentapeptide) pyrophosphoryl-undecaprenol N-acetylglucosamine transferase, found in Vibrio cholerae serotype O1 (strain ATCC 39315 / El Tor Inaba N16961).